Here is a 551-residue protein sequence, read N- to C-terminus: Serine beta-lactamase-like protein LACTB, mitochondrial (551 aa).

A mitochondrion-targeting transit peptide spans M1–L113. Residues P69–G101 are disordered. The active-site Acyl-ester intermediate is the S162. The disordered stretch occupies residues L237–K287. Positions D248–C279 are enriched in basic and acidic residues. N6-succinyllysine occurs at positions 287 and 288. 2 positions are modified to N6-acetyllysine: K301 and K346.

Belongs to the peptidase S12 family. Expressed predominantly in liver.

The protein localises to the mitochondrion. Functionally, mitochondrial serine protease that acts as a regulator of mitochondrial lipid metabolism. Acts by decreasing protein levels of PISD, a mitochondrial enzyme that converts phosphatidylserine (PtdSer) to phosphatidylethanolamine (PtdEtn), thereby affecting mitochondrial lipid metabolism. It is unclear whether it acts directly by mediating proteolysis of PISD or by mediating proteolysis of another lipid metabolism protein. Acts as a tumor suppressor that has the ability to inhibit proliferation of multiple types of cancer cells: probably by promoting decreased levels of PISD, thereby affecting mitochondrial lipid metabolism. This is Serine beta-lactamase-like protein LACTB, mitochondrial from Mus musculus (Mouse).